The chain runs to 774 residues: Ion-translocating oxidoreductase complex subunit C (774 aa).

4Fe-4S ferredoxin-type domains are found at residues 369–397 (GEPQ…QQLY) and 407–436 (KATT…VQYF). [4Fe-4S] cluster is bound by residues C377, C380, C383, C387, C416, C419, C422, and C426. The tract at residues 602–750 (KLEQQQANAE…EPEEQIDPRK (149 aa)) is disordered.

This sequence belongs to the 4Fe4S bacterial-type ferredoxin family. RnfC subfamily. The complex is composed of six subunits: RsxA, RsxB, RsxC, RsxD, RsxE and RsxG. It depends on [4Fe-4S] cluster as a cofactor.

It localises to the cell inner membrane. Functionally, part of a membrane-bound complex that couples electron transfer with translocation of ions across the membrane. Required to maintain the reduced state of SoxR. The polypeptide is Ion-translocating oxidoreductase complex subunit C (Escherichia coli O6:K15:H31 (strain 536 / UPEC)).